The chain runs to 342 residues: 4-hydroxy-2-oxovalerate aldolase (342 aa).

In terms of domain architecture, Pyruvate carboxyltransferase spans 5–257; sequence ITLHDMTLRD…DTGVDVWKIQ (253 aa). 13–14 contacts substrate; the sequence is RD. Asp14 contacts Mn(2+). The active-site Proton acceptor is His17. Residues Ser167 and His196 each contribute to the substrate site. Mn(2+) is bound by residues His196 and His198. Tyr287 provides a ligand contact to substrate.

This sequence belongs to the 4-hydroxy-2-oxovalerate aldolase family.

It carries out the reaction (S)-4-hydroxy-2-oxopentanoate = acetaldehyde + pyruvate. In Acidovorax sp. (strain JS42), this protein is 4-hydroxy-2-oxovalerate aldolase.